The primary structure comprises 192 residues: Thymidylate kinase (192 aa).

7-14 is an ATP binding site; sequence GIDCVGKS.

It belongs to the thymidylate kinase family.

The enzyme catalyses dTMP + ATP = dTDP + ADP. Its function is as follows. Phosphorylation of dTMP to form dTDP in both de novo and salvage pathways of dTTP synthesis. This chain is Thymidylate kinase, found in Campylobacter jejuni subsp. doylei (strain ATCC BAA-1458 / RM4099 / 269.97).